Here is a 1682-residue protein sequence, read N- to C-terminus: Calmodulin-binding transcription activator 1 (1682 aa).

A DNA-binding region (CG-1) is located at residues 63 to 188 (KCSSLPKERH…YLNVPAIEDC (126 aa)). Positions 112–119 (RKKVKYRK) match the Nuclear localization signal motif. Disordered stretches follow at residues 284–375 (RIIS…MVDS) and 599–622 (SSFS…FLQD). Over residues 302-327 (EVQHNDVSEGKHEPSHGRSTSREKRN) the composition is skewed to basic and acidic residues. Polar residues-rich tracts occupy residues 337–367 (HQNS…SGLN) and 599–618 (SSFS…SPSF). The 79-residue stretch at 877 to 955 (DYSPEWSYPE…ISNSVVFEYK (79 aa)) folds into the IPT/TIG domain. The interval 992 to 1020 (MAEMTGSQQHKQASGGGGSGSGSGSGAGG) is disordered. Over residues 1005-1020 (SGGGGSGSGSGSGAGG) the composition is skewed to gly residues. 3 ANK repeats span residues 1066–1095 (RGMT…KHAD), 1111–1141 (FSCT…AISI), and 1145–1174 (LGRL…DEQA). Disordered stretches follow at residues 1217–1249 (ASTN…KKHK) and 1267–1318 (LSLE…SASQ). A compositionally biased stretch (polar residues) spans 1268–1291 (SLEQPNIRKQSPRSKQPSPETISP). Over residues 1308 to 1318 (ETAASQASASQ) the composition is skewed to low complexity. IQ domains lie at 1549–1585 (QEVA…AAIL), 1586–1608 (IQSK…AAVL), and 1609–1631 (IQNF…TAVI).

It belongs to the CAMTA family. May interact with calmodulin.

It localises to the nucleus. Its subcellular location is the cytoplasm. Transcriptional activator. The polypeptide is Calmodulin-binding transcription activator 1 (Mus musculus (Mouse)).